Here is a 383-residue protein sequence, read N- to C-terminus: tRNA-specific 2-thiouridylase MnmA (383 aa).

Residues 9 to 16 (GMSGGVDS) and Met-35 each bind ATP. Residues 95-97 (NPD) form an interaction with target base in tRNA region. Cys-100 functions as the Nucleophile in the catalytic mechanism. Cysteines 100 and 198 form a disulfide. Position 124 (Gly-124) interacts with ATP. The tract at residues 148–150 (KDQ) is interaction with tRNA. Cys-198 functions as the Cysteine persulfide intermediate in the catalytic mechanism. Positions 310–311 (RY) are interaction with tRNA.

Belongs to the MnmA/TRMU family.

The protein localises to the cytoplasm. The enzyme catalyses S-sulfanyl-L-cysteinyl-[protein] + uridine(34) in tRNA + AH2 + ATP = 2-thiouridine(34) in tRNA + L-cysteinyl-[protein] + A + AMP + diphosphate + H(+). In terms of biological role, catalyzes the 2-thiolation of uridine at the wobble position (U34) of tRNA, leading to the formation of s(2)U34. This is tRNA-specific 2-thiouridylase MnmA from Paraburkholderia phytofirmans (strain DSM 17436 / LMG 22146 / PsJN) (Burkholderia phytofirmans).